The chain runs to 379 residues: 8-amino-7-oxononanoate synthase (379 aa).

Positions 27 and 34 each coordinate substrate. Residue 114 to 115 coordinates pyridoxal 5'-phosphate; it reads GY. Substrate is bound at residue His-139. Pyridoxal 5'-phosphate-binding positions include Ser-187, 212 to 215, and 232 to 235; these read DDAH and TLSK. At Lys-235 the chain carries N6-(pyridoxal phosphate)lysine. Thr-344 serves as a coordination point for substrate.

The protein belongs to the class-II pyridoxal-phosphate-dependent aminotransferase family. BioF subfamily. In terms of assembly, homodimer. Requires pyridoxal 5'-phosphate as cofactor.

The enzyme catalyses 6-carboxyhexanoyl-[ACP] + L-alanine + H(+) = (8S)-8-amino-7-oxononanoate + holo-[ACP] + CO2. It functions in the pathway cofactor biosynthesis; biotin biosynthesis. In terms of biological role, catalyzes the decarboxylative condensation of pimeloyl-[acyl-carrier protein] and L-alanine to produce 8-amino-7-oxononanoate (AON), [acyl-carrier protein], and carbon dioxide. The sequence is that of 8-amino-7-oxononanoate synthase from Methylobacterium sp. (strain 4-46).